The chain runs to 410 residues: Multifunctional CCA protein (410 aa).

2 residues coordinate ATP: glycine 8 and arginine 11. Glycine 8 and arginine 11 together coordinate CTP. Mg(2+) is bound by residues aspartate 21 and aspartate 23. Residues arginine 91, arginine 138, and arginine 141 each contribute to the ATP site. CTP-binding residues include arginine 91, arginine 138, and arginine 141. In terms of domain architecture, HD spans 229–347 (TGIHQEMVSD…AQLALVCEAD (119 aa)).

It belongs to the tRNA nucleotidyltransferase/poly(A) polymerase family. Bacterial CCA-adding enzyme type 1 subfamily. As to quaternary structure, monomer. Can also form homodimers and oligomers. It depends on Mg(2+) as a cofactor. Ni(2+) is required as a cofactor.

It catalyses the reaction a tRNA precursor + 2 CTP + ATP = a tRNA with a 3' CCA end + 3 diphosphate. It carries out the reaction a tRNA with a 3' CCA end + 2 CTP + ATP = a tRNA with a 3' CCACCA end + 3 diphosphate. In terms of biological role, catalyzes the addition and repair of the essential 3'-terminal CCA sequence in tRNAs without using a nucleic acid template. Adds these three nucleotides in the order of C, C, and A to the tRNA nucleotide-73, using CTP and ATP as substrates and producing inorganic pyrophosphate. tRNA 3'-terminal CCA addition is required both for tRNA processing and repair. Also involved in tRNA surveillance by mediating tandem CCA addition to generate a CCACCA at the 3' terminus of unstable tRNAs. While stable tRNAs receive only 3'-terminal CCA, unstable tRNAs are marked with CCACCA and rapidly degraded. The chain is Multifunctional CCA protein from Xanthomonas oryzae pv. oryzae (strain MAFF 311018).